A 205-amino-acid chain; its full sequence is Small ribosomal subunit protein uS4 (205 aa).

The segment covering 1–16 has biased composition (basic and acidic residues); sequence MSKRETTKYKIDRRMG. Positions 1-46 are disordered; sequence MSKRETTKYKIDRRMGENIWGRPKSPVNRRDYGPGQHGQRRKGKLS. Positions 94 to 157 constitute an S4 RNA-binding domain; that stretch reads SRLDAVIYRA…KQLVLVLESV (64 aa).

Belongs to the universal ribosomal protein uS4 family. In terms of assembly, part of the 30S ribosomal subunit. Contacts protein S5. The interaction surface between S4 and S5 is involved in control of translational fidelity.

Functionally, one of the primary rRNA binding proteins, it binds directly to 16S rRNA where it nucleates assembly of the body of the 30S subunit. Its function is as follows. With S5 and S12 plays an important role in translational accuracy. In Bartonella henselae (strain ATCC 49882 / DSM 28221 / CCUG 30454 / Houston 1) (Rochalimaea henselae), this protein is Small ribosomal subunit protein uS4.